Consider the following 220-residue polypeptide: Glutamine amidotransferase-like class 1 domain-containing protein 1 (220 aa).

The first 38 residues, 1-38, serve as a signal peptide directing secretion; sequence MASERLPNRPACLLVASGAAEGVSAQSFLHCFTMASTA. A glycan (N-linked (GlcNAc...) asparagine) is linked at Asn-201.

The protein belongs to the peptidase C56 family. In terms of assembly, homotetramer. Component of the FERRY complex composed of five subunits, TBCK, PPP1R21, FERRY3, CRYZL1 and GATD1 with a ratio of 1:2:1:2:4, respectively.

The protein resides in the secreted. It localises to the early endosome. Its function is as follows. Component of the FERRY complex (Five-subunit Endosomal Rab5 and RNA/ribosome intermediary). The FERRY complex directly interacts with mRNAs and RAB5A, and functions as a RAB5A effector involved in the localization and the distribution of specific mRNAs most likely by mediating their endosomal transport. The complex recruits mRNAs and ribosomes to early endosomes through direct mRNA-interaction. This chain is Glutamine amidotransferase-like class 1 domain-containing protein 1, found in Homo sapiens (Human).